The sequence spans 66 residues: Large ribosomal subunit protein bL33c (66 aa).

This sequence belongs to the bacterial ribosomal protein bL33 family.

It localises to the plastid. The protein resides in the chloroplast. This is Large ribosomal subunit protein bL33c from Populus alba (White poplar).